The following is a 228-amino-acid chain: Transcription repressor OFP8 (228 aa).

3 stretches are compositionally biased toward low complexity: residues 1-14 (MSGR…FSLR), 54-79 (ASST…TDSS), and 92-101 (EEPAAAQQEQ). Disordered stretches follow at residues 1 to 21 (MSGR…VVDI) and 36 to 143 (SSSS…QLQE). The segment covering 107–120 (RRRRRQQRRRRRRA) has biased composition (basic residues). The OVATE domain maps to 157-216 (VAVESAEPYEDFRESMVQMVVEKEIYAWDDLNDLLHQFLSLNSPRHHPLILHAFADLWTR).

In terms of assembly, interacts with GSK2. In terms of processing, phosphorylated on serine and threonine residues by GSK2. Dephosphorylated during response to brassinosteroid. As to expression, expressed in roots, stems, stem nodes, young leaves, leaf sheaths, lamina joints, young spikelets, inflorescences, stamens and ovaries, embryos and seeds.

It localises to the nucleus. The protein resides in the cytoplasm. Its function is as follows. Probable transcriptional repressor that regulates multiple aspects of plant growth and development, partly through brassinosteroid (BR) signaling pathway. Acts downstream of the kinase GSK2, a negative regulator of BR signaling. This Oryza sativa subsp. japonica (Rice) protein is Transcription repressor OFP8.